The following is a 337-amino-acid chain: Glyceraldehyde-3-phosphate dehydrogenase (337 aa).

Residues 13 to 14, Asp-35, and Arg-80 contribute to the NAD(+) site; that span reads RI. D-glyceraldehyde 3-phosphate-binding positions include 151-153, Thr-182, 211-212, and Arg-234; these read SCT and TG. Cys-152 acts as the Nucleophile in catalysis. NAD(+) is bound at residue Asn-316.

This sequence belongs to the glyceraldehyde-3-phosphate dehydrogenase family. In terms of assembly, homotetramer.

Its subcellular location is the cytoplasm. It catalyses the reaction D-glyceraldehyde 3-phosphate + phosphate + NAD(+) = (2R)-3-phospho-glyceroyl phosphate + NADH + H(+). It participates in carbohydrate degradation; glycolysis; pyruvate from D-glyceraldehyde 3-phosphate: step 1/5. The sequence is that of Glyceraldehyde-3-phosphate dehydrogenase (GPD1) from Monascus purpureus (Red mold).